Here is a 245-residue protein sequence, read N- to C-terminus: MSTEPIAVSITGLRKSFGDKTVLDGVDLTIRRGEFVVLLGPSGTGKTTLLRLLTGLEVPDAGEVLVPGRRTTVYQEPRLIPSKRVLANVLVGLRRTRSNRAAGLAALAEVQLDGKADQWPATLSGGEAQRAALARALVREPELLLLDEPFAALDALTRLRMQDLVGDLVARHRPAVLMVTHDVDEAVRLADRVIVLDRGRFAVDTAITAPRPRERADPDILRYQTEFLAHLGVGGSDRRPIRSAS.

One can recognise an ABC transporter domain in the interval 8–223; it reads VSITGLRKSF…ERADPDILRY (216 aa). 40 to 47 provides a ligand contact to ATP; the sequence is GPSGTGKT.

It belongs to the ABC transporter superfamily. Aliphatic sulfonates importer (TC 3.A.1.17.2) family. As to quaternary structure, the complex is composed of two ATP-binding proteins (SsuB), two transmembrane proteins (SsuC) and a solute-binding protein (SsuA).

The protein resides in the cell membrane. The enzyme catalyses ATP + H2O + aliphatic sulfonate-[sulfonate-binding protein]Side 1 = ADP + phosphate + aliphatic sulfonateSide 2 + [sulfonate-binding protein]Side 1.. Its function is as follows. Part of the ABC transporter complex SsuABC involved in aliphatic sulfonates import. Responsible for energy coupling to the transport system. The polypeptide is Aliphatic sulfonates import ATP-binding protein SsuB 1 (Nocardia farcinica (strain IFM 10152)).